The primary structure comprises 109 residues: uncharacterized protein (109 aa).

The N-terminal stretch at 1-25 (MKGIFLVVQLGFSIMVFLFLAAVNW) is a signal peptide. The chain crosses the membrane as a helical span at residues 73 to 95 (YPVMSALMIISFLYVLAALFLLI).

The protein resides in the membrane. This is an uncharacterized protein from Bacillus subtilis (strain 168).